The sequence spans 168 residues: Ribosome maturation factor RimM (168 aa).

A PRC barrel domain is found at 96–168 (KDEYYWGDLV…RIRVAWQKDW (73 aa)).

The protein belongs to the RimM family. Binds ribosomal protein uS19.

It is found in the cytoplasm. Its function is as follows. An accessory protein needed during the final step in the assembly of 30S ribosomal subunit, possibly for assembly of the head region. Essential for efficient processing of 16S rRNA. May be needed both before and after RbfA during the maturation of 16S rRNA. It has affinity for free ribosomal 30S subunits but not for 70S ribosomes. This is Ribosome maturation factor RimM from Azoarcus sp. (strain BH72).